We begin with the raw amino-acid sequence, 199 residues long: Prolactin (199 aa).

Cys4 and Cys11 are joined by a disulfide. Ser26, Ser34, and Ser90 each carry phosphoserine. 2 disulfides stabilise this stretch: Cys58–Cys174 and Cys191–Cys199.

Belongs to the somatotropin/prolactin family. As to quaternary structure, interacts with PRLR.

The protein localises to the secreted. Its function is as follows. Prolactin acts primarily on the mammary gland by promoting lactation. This chain is Prolactin (PRL), found in Loxodonta africana (African elephant).